The sequence spans 382 residues: Protein-arginine rhamnosyltransferase (382 aa).

DTDP-beta-L-rhamnose is bound by residues 17–20, Tyr187, Gln252, and 268–272; these read NFGD and RGEDS. Catalysis depends on Asp20, which acts as the Proton acceptor. Glu270 is an active-site residue.

Belongs to the glycosyltransferase 104 family.

It catalyses the reaction dTDP-beta-L-rhamnose + L-arginyl-[protein] = N(omega)-(alpha-L-rhamnosyl)-L-arginyl-[protein] + dTDP + H(+). Functionally, protein-arginine rhamnosyltransferase that catalyzes the transfer of a single rhamnose to elongation factor P (EF-P) on 'Lys-32', a modification required for EF-P-dependent rescue of polyproline stalled ribosomes. The polypeptide is Protein-arginine rhamnosyltransferase (Neisseria meningitidis).